The primary structure comprises 773 residues: Transducin-like enhancer protein 4 (773 aa).

Disordered regions lie at residues 1–22 (MIRDLSKMYPQTRHPAPHQPAQ), 140–162 (HGHGLPVPLTPHPSGLQPPAIPP), and 182–360 (LPIK…ASSL). Residues 1-136 (MIRDLSKMYP…AIIGQQLQAQ (136 aa)) form a q domain region. Positions 137–204 (HLSHGHGLPV…HQRDRDSIKS (68 aa)) are GP domain. The segment covering 183 to 202 (PIKDEKKHHDNDHQRDRDSI) has biased composition (basic and acidic residues). The span at 203–212 (KSSSVSPSAS) shows a compositional bias: low complexity. Residues 205–274 (SSVSPSASFR…SPRGSPAHSP (70 aa)) are ccN domain. Serine 208, serine 212, and serine 222 each carry phosphoserine. The span at 215–252 (GAEKHRNSADYSSESKKQKTEEKEIAARYDSDGEKSDD) shows a compositional bias: basic and acidic residues. Lysine 237 is modified (N6-acetyllysine). A phosphoserine mark is found at serine 245, serine 250, serine 269, and serine 273. Residues 273–289 (SPRENGLDKTRLLKKDA) are compositionally biased toward basic and acidic residues. Residues 275-452 (RENGLDKTRL…PGGKPAYSFH (178 aa)) are SP domain. An N6-acetyllysine modification is found at lysine 281. Low complexity predominate over residues 290–305 (PISPASIASSSSTPSS). Phosphoserine is present on serine 292. Residues 317–328 (TTPVSKSNTPTP) are compositionally biased toward polar residues. Threonine 318 bears the Phosphothreonine mark. Phosphoserine is present on residues serine 321 and serine 323. Phosphothreonine occurs at positions 325, 327, 334, and 340. At serine 419 the chain carries Phosphoserine. WD repeat units lie at residues 485–523 (NHGEVVCAVTISNPTRHVYTGGKGCVKVWDISHPGNKSP), 531–570 (NRDNYIRSCRLLPDGRTLIVGGEASTLSIWDLAAPTPRIK), 575–614 (SSAPACYALAISPDSKVCFSCCSDGNIAVWDLHNQTLVRQ), 617–656 (GHTDGASCIDISNDGTKLWTGGLDNTVRSWDLREGRQLQQ), 658–697 (DFTSQIFSLGYCPTGEWLAVGMENSNVEVLHVTKPDKYQL), 699–738 (LHESCVLSLKFAHCGKWFVSTGKDNLLNAWRTPYGASIFQ), and 740–773 (KESSSVLSCDISVDDKYIVTGSGDKKATVYEVIY).

It belongs to the WD repeat Groucho/TLE family. As to quaternary structure, homooligomer and heterooligomer with other family members. Interacts with PAX5. Interacts with LEF1, TCF7, TCF7L1 and TCF7L2. Interacts with ZNF703; TLE4 may mediate ZNF703 transcriptional repression. Interacts with SIX3 and SIX6. Interacts with PAX2. Interacts with TLE1. Post-translationally, phosphorylated. PAX5 binding increases phosphorylation. Ubiquitinated by XIAP/BIRC4. In all tissues examined, mostly in brain, and muscle.

It localises to the nucleus. Functionally, transcriptional corepressor that binds to a number of transcription factors. Inhibits the transcriptional activation mediated by PAX5, and by CTNNB1 and TCF family members in Wnt signaling. The effects of full-length TLE family members may be modulated by association with dominant-negative AES. Essential for the transcriptional repressor activity of SIX3 during retina and lens development and for SIX3 transcriptional auto-repression. Involved in transcriptional repression of GNRHR and enhances MSX1-mediated transcriptional repression of CGA/alpha-GSU. This is Transducin-like enhancer protein 4 (TLE4) from Homo sapiens (Human).